A 356-amino-acid polypeptide reads, in one-letter code: tRNA-specific 2-thiouridylase MnmA (356 aa).

6–13 (AVSGGTDS) lines the ATP pocket. Cys95 acts as the Nucleophile in catalysis. An intrachain disulfide couples Cys95 to Cys195. Gly119 lines the ATP pocket. An interaction with tRNA region spans residues 145–147 (KDQ). Cys195 functions as the Cysteine persulfide intermediate in the catalytic mechanism. Residues 300–301 (RY) form an interaction with tRNA region.

It belongs to the MnmA/TRMU family.

It is found in the cytoplasm. The enzyme catalyses S-sulfanyl-L-cysteinyl-[protein] + uridine(34) in tRNA + AH2 + ATP = 2-thiouridine(34) in tRNA + L-cysteinyl-[protein] + A + AMP + diphosphate + H(+). In terms of biological role, catalyzes the 2-thiolation of uridine at the wobble position (U34) of tRNA, leading to the formation of s(2)U34. The chain is tRNA-specific 2-thiouridylase MnmA from Oleidesulfovibrio alaskensis (strain ATCC BAA-1058 / DSM 17464 / G20) (Desulfovibrio alaskensis).